Here is a 292-residue protein sequence, read N- to C-terminus: 4-hydroxy-tetrahydrodipicolinate synthase (292 aa).

Threonine 45 serves as a coordination point for pyruvate. The active-site Proton donor/acceptor is tyrosine 133. The active-site Schiff-base intermediate with substrate is the lysine 161. Isoleucine 203 lines the pyruvate pocket.

It belongs to the DapA family. As to quaternary structure, homotetramer; dimer of dimers.

It localises to the cytoplasm. The enzyme catalyses L-aspartate 4-semialdehyde + pyruvate = (2S,4S)-4-hydroxy-2,3,4,5-tetrahydrodipicolinate + H2O + H(+). It functions in the pathway amino-acid biosynthesis; L-lysine biosynthesis via DAP pathway; (S)-tetrahydrodipicolinate from L-aspartate: step 3/4. Catalyzes the condensation of (S)-aspartate-beta-semialdehyde [(S)-ASA] and pyruvate to 4-hydroxy-tetrahydrodipicolinate (HTPA). The polypeptide is 4-hydroxy-tetrahydrodipicolinate synthase (Klebsiella pneumoniae subsp. pneumoniae (strain ATCC 700721 / MGH 78578)).